The primary structure comprises 222 residues: 2-C-methyl-D-erythritol 4-phosphate cytidylyltransferase (222 aa).

The protein belongs to the IspD/TarI cytidylyltransferase family. IspD subfamily.

The enzyme catalyses 2-C-methyl-D-erythritol 4-phosphate + CTP + H(+) = 4-CDP-2-C-methyl-D-erythritol + diphosphate. It participates in isoprenoid biosynthesis; isopentenyl diphosphate biosynthesis via DXP pathway; isopentenyl diphosphate from 1-deoxy-D-xylulose 5-phosphate: step 2/6. Functionally, catalyzes the formation of 4-diphosphocytidyl-2-C-methyl-D-erythritol from CTP and 2-C-methyl-D-erythritol 4-phosphate (MEP). The polypeptide is 2-C-methyl-D-erythritol 4-phosphate cytidylyltransferase (Azobacteroides pseudotrichonymphae genomovar. CFP2).